Reading from the N-terminus, the 121-residue chain is Large ribosomal subunit protein uL14 (121 aa).

Belongs to the universal ribosomal protein uL14 family. As to quaternary structure, part of the 50S ribosomal subunit. Forms a cluster with proteins L3 and L19. In the 70S ribosome, L14 and L19 interact and together make contacts with the 16S rRNA in bridges B5 and B8.

Binds to 23S rRNA. Forms part of two intersubunit bridges in the 70S ribosome. The protein is Large ribosomal subunit protein uL14 of Prochlorococcus marinus (strain MIT 9313).